The primary structure comprises 390 residues: MVTFWAETAASAATTSKGEPPSKKRKTNPSPPPSLLSLPDVLILNCLSRIPKSYYPKLSIVSKTFRDLIISIDLNHARFHHKTQEHFFHVCLKLPDRPLPSWYTLWIKPQGFDDKEEEKKKKKKSTLVQVPSSYASQTPLLVVGIDSDVYAFKQCYPPSRVMFVRNKECVIWRNAPDMTVARANPVAYVFDRKIYVMGGCAETESANWGEVFDPKTQTWEPLPVPSPELRFSSMIRKIEMIQGKFYVRSNDSKDSVYDPIREKWNVAAKPQLNDSRCSVGNVWYSCRPNSFLWFDNEIKNWRLIKGLSSLNHSCRSGLIETVCYDGNLLLLWDKPTKPRRRVCEDKYICCALISFNKRKNGQVWGKVEWSNVVLTVPSSYRFLRSTVIRT.

Residues 1–16 show a composition bias toward low complexity; that stretch reads MVTFWAETAASAATTS. Residues 1–33 are disordered; sequence MVTFWAETAASAATTSKGEPPSKKRKTNPSPPP. An F-box domain is found at 32–79; that stretch reads PPSLLSLPDVLILNCLSRIPKSYYPKLSIVSKTFRDLIISIDLNHARF. Kelch repeat units follow at residues 139-192, 193-243, 245-286, and 288-321; these read PLLV…VFDR, KIYV…MIQG, FYVR…WYSC, and PNSF…LIET.

This Arabidopsis thaliana (Mouse-ear cress) protein is F-box/kelch-repeat protein At4g39753.